The sequence spans 749 residues: MERTYDYAWIIPFIPLTVPMSIGLGLLLVPTATKSILRMWAFFSVSLLSIVMVFSADLSIQQINCSFIYQYLWSWTINSDFSLELGCLIDPLTSIMLILITTVGIMVLIYSDNYMSHDQGYLRFFASMSFSNTSMLGLVTSSNLIQIYIFWELVGMCSYLLIGFWFTRPIAANACQKAFVTNRVGDFGLLLGILGLYWITGSFEFRDLFKIFNNLIHNNGVNSLFVTFFASLLFLGAVAKSAQFPLHIWLPDAMEGPTPISALIHAATMVVAGIFLVARLLPLFTVIPYIMNLISLIGVITLLLGATFALAQRDIKKSLAYSTMSQLGYIMLAPGIGSYRAASFHLITHAYSKALLFLGSGSIIHSMEPIVGYSPDKSQNMILMGGLTKYLPITKITFLLGTLSLCGIPPLACFWSKDEILNDSWLYSPIFAIIACFTTGLTAFYMFRMYLLTFEEHLRVHFQKYSGATNSSFYSISIWGKEASQLLNSGLLLSTMNNNEKVSFFLNKTYEIDENVRKMMRSFSTSTHFVKKKTPMYPHESDNTMLLPLLVLVIFTLFVGFIGVRFDQGVMDLDILSKWLTPSINFLHRNLNDPWDWYEFATNAIFSVSIACFGIWIASLLYGSVYSSFQNLDLMNSFVKIDSKRILLEPIINVIYNWSYNRGYIDVYYATVFTRGIRGLAKLTHSFDRRVIDGITNGFGIASFFVGEGVKYVGGGRISSYLFLYLSYVSIFLVISYFCFGICNSILFF.

The next 16 helical transmembrane spans lie at Trp-9 to Val-29, Trp-40 to Ile-60, Ile-89 to Ile-109, Ile-147 to Thr-167, Gly-185 to Phe-205, Asn-219 to Ala-239, Thr-258 to Ala-278, Leu-280 to Ile-300, Leu-327 to Ile-347, Ala-354 to Ser-374, Ile-396 to Ser-416, Trp-425 to Tyr-445, Thr-544 to Val-564, Ile-605 to Val-625, Gly-694 to Gly-714, and Leu-722 to Ile-742.

It belongs to the complex I subunit 5 family. NDH is composed of at least 16 different subunits, 5 of which are encoded in the nucleus.

It is found in the plastid. Its subcellular location is the chloroplast thylakoid membrane. The enzyme catalyses a plastoquinone + NADH + (n+1) H(+)(in) = a plastoquinol + NAD(+) + n H(+)(out). The catalysed reaction is a plastoquinone + NADPH + (n+1) H(+)(in) = a plastoquinol + NADP(+) + n H(+)(out). Functionally, NDH shuttles electrons from NAD(P)H:plastoquinone, via FMN and iron-sulfur (Fe-S) centers, to quinones in the photosynthetic chain and possibly in a chloroplast respiratory chain. The immediate electron acceptor for the enzyme in this species is believed to be plastoquinone. Couples the redox reaction to proton translocation, and thus conserves the redox energy in a proton gradient. This Illicium oligandrum (Star anise) protein is NAD(P)H-quinone oxidoreductase subunit 5, chloroplastic (ndhF).